The sequence spans 447 residues: Argininosuccinate synthase (447 aa).

ATP-binding positions include 17–25 (AFSGGLDTS) and Ala-43. L-citrulline is bound at residue Tyr-99. Residues Gly-129 and Thr-131 each contribute to the ATP site. L-aspartate-binding residues include Thr-131, Asn-135, and Asp-136. An L-citrulline-binding site is contributed by Asn-135. Asp-136 serves as a coordination point for ATP. L-citrulline contacts are provided by Arg-139 and Ser-192. Residue Asp-194 coordinates ATP. Residues Thr-201, Glu-203, and Glu-280 each contribute to the L-citrulline site.

The protein belongs to the argininosuccinate synthase family. Type 2 subfamily. As to quaternary structure, homotetramer.

Its subcellular location is the cytoplasm. It catalyses the reaction L-citrulline + L-aspartate + ATP = 2-(N(omega)-L-arginino)succinate + AMP + diphosphate + H(+). It functions in the pathway amino-acid biosynthesis; L-arginine biosynthesis; L-arginine from L-ornithine and carbamoyl phosphate: step 2/3. This is Argininosuccinate synthase from Salmonella schwarzengrund (strain CVM19633).